Here is a 273-residue protein sequence, read N- to C-terminus: Homeobox protein Hox-C13b (273 aa).

The homeobox DNA-binding region spans 201–260 (GRKKRVPYTKIQLKELEKEYAASKFITKDRRRRISATTSLSERQVTIWFQNRRVKEKKFV).

This sequence belongs to the Abd-B homeobox family.

Its subcellular location is the nucleus. In terms of biological role, sequence-specific transcription factor which is part of a developmental regulatory system that provides cells with specific positional identities on the anterior-posterior axis. Plays a role in early embryonic development. This chain is Homeobox protein Hox-C13b (hoxc13b), found in Danio rerio (Zebrafish).